Reading from the N-terminus, the 362-residue chain is Golgi-resident adenosine 3',5'-bisphosphate 3'-phosphatase (362 aa).

Methionine 1 bears the N-acetylmethionine mark. The Cytoplasmic portion of the chain corresponds to 1 to 12 (MAPMGIRLSPLG). A helical transmembrane segment spans residues 13–33 (VAVFCLLGLGVLYHLYSGFLA). At 34–362 (GRFSLFGLGG…LPDLEKTGHK (329 aa)) the chain is on the lumenal side. A disordered region spans residues 88-109 (RESNVLHEKSKGKTREGADDKM). Catalysis depends on aspartate 113, which acts as the Proton acceptor. 4 residues coordinate Mg(2+): glutamate 136, aspartate 177, leucine 179, and aspartate 180. Residue threonine 182 is the Proton acceptor of the active site. Residues serine 245 and histidine 248 each contribute to the AMP site. An N-linked (GlcNAc...) asparagine glycan is attached at asparagine 262. Residues glycine 271 and lysine 275 each contribute to the AMP site. Aspartate 303 contacts Mg(2+).

The protein belongs to the inositol monophosphatase superfamily. The cofactor is Mg(2+). In terms of processing, contains N-linked glycan resistant to endoglycosydase H.

It is found in the golgi apparatus. It localises to the trans-Golgi network membrane. It carries out the reaction adenosine 3',5'-bisphosphate + H2O = AMP + phosphate. The protein operates within sulfur metabolism. Its activity is regulated as follows. Strongly inhibited by lithium. Functionally, exhibits 3'-nucleotidase activity toward adenosine 3',5'-bisphosphate (PAP), namely hydrolyzes adenosine 3',5'-bisphosphate into adenosine 5'-monophosphate (AMP) and a phosphate. May play a role in the formation of skeletal elements derived through endochondral ossification, possibly by clearing adenosine 3',5'-bisphosphate produced by Golgi sulfotransferases during glycosaminoglycan sulfation. Has no activity toward 3'-phosphoadenosine 5'-phosphosulfate (PAPS) or inositol phosphate (IP) substrates including I(1)P, I(1,4)P2, I(1,3,4)P3, I(1,4,5)P3 and I(1,3,4,5)P4. This Bos taurus (Bovine) protein is Golgi-resident adenosine 3',5'-bisphosphate 3'-phosphatase (BPNT2).